A 639-amino-acid polypeptide reads, in one-letter code: Chaperone protein DnaK (639 aa).

Residue Thr198 is modified to Phosphothreonine; by autocatalysis. The span at 603 to 618 (AKAQTQGGAQEGAAKQ) shows a compositional bias: low complexity. The disordered stretch occupies residues 603-639 (AKAQTQGGAQEGAAKQSNATADDVVDAEFEEVKDDKK). The segment covering 625–639 (DVVDAEFEEVKDDKK) has biased composition (acidic residues).

Belongs to the heat shock protein 70 family.

Functionally, acts as a chaperone. The sequence is that of Chaperone protein DnaK from Shewanella oneidensis (strain ATCC 700550 / JCM 31522 / CIP 106686 / LMG 19005 / NCIMB 14063 / MR-1).